Consider the following 361-residue polypeptide: POU domain, class 3, transcription factor 4 (361 aa).

Disordered regions lie at residues 99–131 and 144–192; these read PHVA…GQPL and MLEH…PTSD. Positions 119-131 are enriched in polar residues; that stretch reads APNSSITNSGQPL. Over residues 165-183 the composition is skewed to basic and acidic residues; that stretch reads VLREPPDHGELGSHHCQDH. In terms of domain architecture, POU-specific spans 186 to 260; it reads EETPTSDELE…LLNKWLEEAD (75 aa). At S265 the chain carries Phosphoserine. The homeobox DNA-binding region spans 278–337; sequence KRKKRTSIEVSVKGVLETHFLKCPKPAAQEISSLADSLQLEKEVVRVWFCNRRQKEKRMT. The segment at 334-361 is disordered; that stretch reads KRMTPPGDQQPHEVYSHTVKTDASCHDL. Residues 343 to 361 are compositionally biased toward basic and acidic residues; the sequence is QPHEVYSHTVKTDASCHDL.

This sequence belongs to the POU transcription factor family. Class-3 subfamily.

The protein resides in the nucleus. Probable transcription factor which exert its primary action widely during early neural development and in a very limited set of neurons in the mature brain. The protein is POU domain, class 3, transcription factor 4 (Pou3f4) of Mesocricetus auratus (Golden hamster).